Here is an 890-residue protein sequence, read N- to C-terminus: tRNase Z TRZ3, mitochondrial (890 aa).

Residues 1 to 44 (MINSMPYLHKNLRLLRLLSSKSSPFPLSLRPFSPRSFSLSTLFS) constitute a mitochondrion transit peptide. Positions 46–67 (SSSSSSMENNEATNGSKSSSNS) are disordered.

This sequence belongs to the RNase Z family. As to quaternary structure, homodimer. The cofactor is Zn(2+). Ca(2+) serves as cofactor. Requires Mn(2+) as cofactor. Mg(2+) is required as a cofactor.

It is found in the mitochondrion. It localises to the nucleus. The catalysed reaction is Endonucleolytic cleavage of RNA, removing extra 3' nucleotides from tRNA precursor, generating 3' termini of tRNAs. A 3'-hydroxy group is left at the tRNA terminus and a 5'-phosphoryl group is left at the trailer molecule.. In terms of biological role, zinc phosphodiesterase, which displays tRNA 3'-processing endonuclease activity. Involved in tRNA maturation, by removing a 3'-trailer from precursor tRNA. Can process the mitochondrial tRNA-like structures (t-elements). Involved in the processing of small nucleolar RNAs (snoRNAs). In Arabidopsis thaliana (Mouse-ear cress), this protein is tRNase Z TRZ3, mitochondrial.